The following is a 166-amino-acid chain: Putative lipoprotein Lxx21020 (166 aa).

The signal sequence occupies residues 1-22; the sequence is MTKTTRLLRATTVAAILLGLTG. A lipid anchor (N-palmitoyl cysteine) is attached at Cys-23. Cys-23 carries S-diacylglycerol cysteine lipidation.

The protein resides in the cell membrane. This chain is Putative lipoprotein Lxx21020, found in Leifsonia xyli subsp. xyli (strain CTCB07).